The primary structure comprises 118 residues: UPF0295 protein GWCH70_0499 (118 aa).

The next 2 helical transmembrane spans lie at 12 to 32 (IRTF…IGIF) and 42 to 62 (LFMI…FWIG).

This sequence belongs to the UPF0295 family.

The protein localises to the cell membrane. The sequence is that of UPF0295 protein GWCH70_0499 from Geobacillus sp. (strain WCH70).